A 351-amino-acid chain; its full sequence is Biotin synthase (351 aa).

In terms of domain architecture, Radical SAM core spans 58–285 (NTVQLSTLLS…RAMVRLSAGR (228 aa)). The [4Fe-4S] cluster site is built by cysteine 73, cysteine 77, and cysteine 80. Positions 117, 148, 208, and 280 each coordinate [2Fe-2S] cluster.

It belongs to the radical SAM superfamily. Biotin synthase family. Homodimer. [4Fe-4S] cluster is required as a cofactor. The cofactor is [2Fe-2S] cluster.

The catalysed reaction is (4R,5S)-dethiobiotin + (sulfur carrier)-SH + 2 reduced [2Fe-2S]-[ferredoxin] + 2 S-adenosyl-L-methionine = (sulfur carrier)-H + biotin + 2 5'-deoxyadenosine + 2 L-methionine + 2 oxidized [2Fe-2S]-[ferredoxin]. The protein operates within cofactor biosynthesis; biotin biosynthesis; biotin from 7,8-diaminononanoate: step 2/2. Its function is as follows. Catalyzes the conversion of dethiobiotin (DTB) to biotin by the insertion of a sulfur atom into dethiobiotin via a radical-based mechanism. The protein is Biotin synthase of Paraburkholderia phymatum (strain DSM 17167 / CIP 108236 / LMG 21445 / STM815) (Burkholderia phymatum).